A 218-amino-acid chain; its full sequence is Small ribosomal subunit protein uS3c (218 aa).

In terms of domain architecture, KH type-2 spans 47–118; the sequence is VQKNIRISSG…KLNIAITRIS (72 aa).

It belongs to the universal ribosomal protein uS3 family. As to quaternary structure, part of the 30S ribosomal subunit.

It localises to the plastid. Its subcellular location is the chloroplast. In Lepidium virginicum (Virginia pepperweed), this protein is Small ribosomal subunit protein uS3c (rps3).